Reading from the N-terminus, the 299-residue chain is 4-hydroxybenzoate octaprenyltransferase (299 aa).

8 helical membrane passes run 33–53 (VGFL…AGGV), 56–76 (WWTL…GCVI), 107–127 (LLMF…MNQL), 151–171 (LPQV…FAAI), 180–200 (WLLY…CAMV), 214–234 (AILF…LMLF), 247–267 (HTYW…FIIA), and 278–298 (AFMH…LATT).

This sequence belongs to the UbiA prenyltransferase family. Requires Mg(2+) as cofactor.

It is found in the cell inner membrane. It carries out the reaction all-trans-octaprenyl diphosphate + 4-hydroxybenzoate = 4-hydroxy-3-(all-trans-octaprenyl)benzoate + diphosphate. It functions in the pathway cofactor biosynthesis; ubiquinone biosynthesis. Its function is as follows. Catalyzes the prenylation of para-hydroxybenzoate (PHB) with an all-trans polyprenyl group. Mediates the second step in the final reaction sequence of ubiquinone-8 (UQ-8) biosynthesis, which is the condensation of the polyisoprenoid side chain with PHB, generating the first membrane-bound Q intermediate 3-octaprenyl-4-hydroxybenzoate. In Xylella fastidiosa (strain 9a5c), this protein is 4-hydroxybenzoate octaprenyltransferase.